Consider the following 683-residue polypeptide: Stromal interaction molecule 1 (683 aa).

The signal sequence occupies residues 1–22 (MDVCARLALWLLWGLLLHHGQS). Residues 23–211 (LSQSHSEKAT…LLTRHNHLKD (189 aa)) lie on the Extracellular side of the membrane. 2 EF-hand domains span residues 62-95 (SFDA…EDLN) and 100-124 (TVKH…AWKS). 5 residues coordinate Ca(2+): aspartate 74, aspartate 76, asparagine 78, aspartate 80, and glutamate 85. 2 N-linked (GlcNAc...) asparagine glycosylation sites follow: asparagine 129 and asparagine 169. The 69-residue stretch at 130 to 198 (WTVDEVVQWL…QLKALDTVLF (69 aa)) folds into the SAM domain. The helical transmembrane segment at 212–232 (FMLVVSIVIGVGGCWFAYIQN) threads the bilayer. At 233–683 (RYSKEHMKKM…LKIFKKPLKK (451 aa)) the chain is on the cytoplasmic side. Positions 246-440 (LEGLHRAEQS…IEILCGFQIV (195 aa)) form a coiled coil. Position 255 is a phosphoserine (serine 255). Residues 342–440 (PEALQKWLQL…IEILCGFQIV (99 aa)) are SOAR/CAD. The segment at 473–481 (DDVDDMDEE) is contributes to fast Ca(2+)-dependent inactivation of CRAC channels. Residues 488-497 (MQSPSLQSSV) are compositionally biased toward low complexity. A disordered region spans residues 488–535 (MQSPSLQSSVRQRLTEPQHGLGSQRDLTHSDSESSLHMSDRQRLAPKP). Threonine 502 is subject to Phosphothreonine. Phosphoserine is present on serine 510. The segment covering 513 to 530 (DLTHSDSESSLHMSDRQR) has biased composition (basic and acidic residues). Threonine 515 is modified (phosphothreonine). A phosphoserine mark is found at serine 517, serine 519, serine 521, serine 522, serine 565, serine 573, serine 606, serine 616, and serine 626. The tract at residues 597–683 (LSSPALPSGS…LKIFKKPLKK (87 aa)) is disordered. Positions 640-643 (TRIP) match the Microtubule tip localization signal motif. The span at 653 to 664 (EEDNGSIGEETD) shows a compositional bias: acidic residues. Serine 658 carries the phosphoserine modification. Phosphothreonine is present on threonine 663. Serine 666 is subject to Phosphoserine. Basic residues predominate over residues 668 to 683 (GRKKFPLKIFKKPLKK). Positions 670–683 (KKFPLKIFKKPLKK) are required for generation of inwardly rectifying CRAC currents.

In terms of assembly, monomer in the presence of Ca(2+). It oligomerizes in absence of Ca(2+). Forms homooligomers and heterooligomers with STIM2. Interacts with pore-forming subunits of CRAC channels, ORAI1, ORAI2 and ORAI3; this interaction is potentiated upon Ca(2+) store depletion. Interacts (via the transmembrane region and the SOAR/CAD domain) with SPPL3; the interaction promotes the binding of STIM1 to ORAI1. Interacts with ORAI1. Interacts with MAPRE1; probably required for targeting to the growing microtubule plus ends. Interacts with CRACR2A/EFCAB4B; the interaction is direct and takes place in absence of Ca(2+). Forms a complex with CRACR2A/EFCAB4B and ORAI1 at low concentration of Ca(2+), the complex dissociates at elevated Ca(2+) concentrations. Interacts with SARAF, promoting a slow inactivation of STIM1-dependent SOCE activity, possibly by facilitating the deoligomerization of STIM1. Interacts with EFHB; the interaction takes place upon Ca(2+)-store depletion and inhibits the association with SARAF. Interacts with ASPH. Interacts with SLC35G1; intracellular Ca(2+)-dependent. May interact with ATP1A1, ATP2A2, ATP2B1, ATP2B4, KPNB1 and XPO1; through SLC35G1. Interacts with TMEM203. Interacts with STIMATE, promoting STIM1 conformational switch. Interacts with TMEM178A. Interacts with CASQ1 (via C-terminal end and preferentially with the monomeric form); this interaction increases in response to a depletion of intracellular calcium, decreases both STIM1 aggregation and clustering, interaction of STIM1 with ORAI1 and store-operated Ca(2+) entry (SOCE) activity. Glycosylation is required for cell surface expression. In terms of processing, phosphorylated predominantly on Ser residues.

The protein localises to the cell membrane. It localises to the endoplasmic reticulum membrane. The protein resides in the sarcoplasmic reticulum. It is found in the cytoplasm. Its subcellular location is the cytoskeleton. Functionally, acts as a Ca(2+) sensor that gates two major inward rectifying Ca(2+) channels at the plasma membrane: Ca(2+) release-activated Ca(2+) (CRAC) channels and arachidonate-regulated Ca(2+)-selective (ARC) channels. Plays a role in mediating store-operated Ca(2+) entry (SOCE), a Ca(2+) influx following depletion of intracellular Ca(2+) stores. Upon Ca(2+) depletion, translocates from the endoplasmic reticulum to the plasma membrane where it activates CRAC channel pore-forming subunits ORA1, ORA2 and ORAI3 to generate sustained and oscillatory Ca(2+) entry. Involved in enamel formation. This is Stromal interaction molecule 1 (STIM1) from Bos taurus (Bovine).